The primary structure comprises 744 residues: Glucosamine inositolphosphorylceramide transferase 1 (744 aa).

Transmembrane regions (helical) follow at residues 31–51 (FLVAAAAGAALVGGVYFWLVV), 378–398 (SLFGYMGFLVAVALVTFVGFV), and 460–480 (LFFCVIALIGIVNVCIAVHFL). Residues N534, 558–563 (NSLNNR), 579–581 (DDD), R609, and 665–669 (FNCED) each bind substrate. D581 contacts Mn(2+). Cysteines 667 and 718 form a disulfide. The active site involves D669.

The protein belongs to the glycosyltransferase 64 family. Requires Mn(2+) as cofactor.

The protein localises to the membrane. The protein operates within sphingolipid metabolism. Functionally, essential protein. Glycosyltransferase that mediates the glycosylation of glycosylinositol phosphorylceramides (GIPCs), the major sphingolipids in the plasma membrane; acts as a HexN(Ac)-specific GIPC sugar transferase. Responsible for the glycosylation of a subgroup of GIPCs found in seeds and pollen that contain GlcNAc and GlcN (GlcN(Ac)). Maybe involved in the maintenance of cell-cell adhesion. The protein is Glucosamine inositolphosphorylceramide transferase 1 of Oryza sativa subsp. indica (Rice).